A 282-amino-acid polypeptide reads, in one-letter code: Pantothenate synthetase (282 aa).

Residue 30–37 coordinates ATP; that stretch reads MGALHAGH. His-37 (proton donor) is an active-site residue. Gln-61 is a (R)-pantoate binding site. Gln-61 contacts beta-alanine. Position 147–150 (147–150) interacts with ATP; the sequence is GEKD. A (R)-pantoate-binding site is contributed by Gln-153. ATP is bound by residues Val-176 and 184–187; that span reads LSSR.

This sequence belongs to the pantothenate synthetase family. Homodimer.

It is found in the cytoplasm. The enzyme catalyses (R)-pantoate + beta-alanine + ATP = (R)-pantothenate + AMP + diphosphate + H(+). It participates in cofactor biosynthesis; (R)-pantothenate biosynthesis; (R)-pantothenate from (R)-pantoate and beta-alanine: step 1/1. Functionally, catalyzes the condensation of pantoate with beta-alanine in an ATP-dependent reaction via a pantoyl-adenylate intermediate. The sequence is that of Pantothenate synthetase from Bacteroides fragilis (strain YCH46).